The chain runs to 643 residues: Extracellular metalloproteinase 4 (643 aa).

The N-terminal stretch at 1 to 18 (MHGLMLAGLLALPLSVLG) is a signal peptide. Positions 19-254 (HPTESHSSGI…VHSVVDYVSA (236 aa)) are excised as a propeptide. The segment covering 47–57 (TKSDAVPKQDG) has biased composition (basic and acidic residues). The disordered stretch occupies residues 47–73 (TKSDAVPKQDGESFTTSSTGNDNSSSG). Residues 61–73 (TTSSTGNDNSSSG) show a composition bias toward low complexity. N-linked (GlcNAc...) asparagine glycosylation is found at asparagine 271 and asparagine 420. Histidine 437 contributes to the Zn(2+) binding site. Residue glutamate 438 is part of the active site. Residue histidine 441 participates in Zn(2+) binding. N-linked (GlcNAc...) asparagine glycans are attached at residues asparagine 603 and asparagine 629.

It belongs to the peptidase M36 family. Requires Zn(2+) as cofactor.

Its subcellular location is the secreted. In terms of biological role, secreted metalloproteinase probably acting as a virulence factor. This Trichophyton rubrum (Athlete's foot fungus) protein is Extracellular metalloproteinase 4 (MEP4).